The primary structure comprises 594 residues: Putative aldehyde oxidase Art an 7 (594 aa).

The N-terminal stretch at 1–23 (MASSIKTVILFLLPLLLAYSVLA) is a signal peptide. The tract at residues 28–56 (TDGGDKPGPEIDDGGGDKPVPGNNDGASD) is disordered.

In terms of processing, the N-terminus is blocked. Glycosylated. Expressed in pollen (at protein level).

The protein resides in the cytoplasm. The enzyme catalyses an aldehyde + O2 + H2O = a carboxylate + H2O2 + H(+). Catalyzes the oxidation of aldehydes to the corresponding carboxylate by coupling the reaction to the reduction of dioxygen to hydrogen peroxide. Substrates include glyoxal and other aldehydes. Does not have enzymatic activity on D-galactose. The polypeptide is Putative aldehyde oxidase Art an 7 (Artemisia annua (Sweet wormwood)).